The chain runs to 476 residues: Doublesex- and mab-3-related transcription factor 3 (476 aa).

Residues 29–76 (CARCRNHGVLSWLKGHKRYCRFKDCTCEKCILIIERQRVMAAQVALRR) constitute a DNA-binding region (DM). Disordered stretches follow at residues 89–130 (DSLR…RPTA) and 147–195 (GTLP…SKNC). Low complexity predominate over residues 102–121 (DAAATAATASQSSPASQASQ). The span at 165–174 (DSSSTDNTAE) shows a compositional bias: polar residues. Residues 176-185 (FSDKDTDQRS) show a composition bias toward basic and acidic residues. The DMA domain maps to 255–290 (RPPLEVLKKIFPNQKPTVLELILKGCGGDLVSAVEV). Over residues 418–432 (NSTSVFRSSPVLSSR) the composition is skewed to polar residues. The tract at residues 418–476 (NSTSVFRSSPVLSSRTTEDPRISIPDDGCPIVTKQSIYTEDDYDERSDSSDSRILNTSS) is disordered.

This sequence belongs to the DMRT family. In terms of tissue distribution, expressed in the ventral spinal cord, in a restrical population of neurons migrating ventrically in the developing spinal cord at 11.5 dpc.

It localises to the nucleus. In terms of biological role, probable transcription factor that plays a role in configuring the spinal circuits controlling stride in vertebrates. Involved in neuronal specification within specific subdivision of spinal cord neurons and in the development of a coordinated locomotor network controlling limb movements. May regulate transcription during sexual development. This chain is Doublesex- and mab-3-related transcription factor 3 (Dmrt3), found in Mus musculus (Mouse).